The sequence spans 212 residues: Ribonuclease HII (212 aa).

Positions 22–211 (GLVAGVDEVG…VADRILLQNT (190 aa)) constitute an RNase H type-2 domain. A divalent metal cation is bound by residues D28, E29, and D120.

It belongs to the RNase HII family. The cofactor is Mn(2+). Requires Mg(2+) as cofactor.

The protein localises to the cytoplasm. It carries out the reaction Endonucleolytic cleavage to 5'-phosphomonoester.. Its function is as follows. Endonuclease that specifically degrades the RNA of RNA-DNA hybrids. The polypeptide is Ribonuclease HII (Shewanella frigidimarina (strain NCIMB 400)).